Here is a 115-residue protein sequence, read N- to C-terminus: MKPVVKEYTNDEQLMKDVEELQKMGVAKEDVYVLAHDDDRTERLADNTNANTIGAKETGFKHAVGNIFNKKGDELRNKIHEIGFSEDEAAQFEKRLDEGKVLLFVTDNEKVKAWA.

The sequence is that of General stress protein 17M (yflT) from Bacillus subtilis (strain 168).